Here is a 1322-residue protein sequence, read N- to C-terminus: Serine/threonine-protein kinase TIO (1322 aa).

In terms of domain architecture, Protein kinase spans 6–256 (YHVIELVGEG…WPALREHPFV (251 aa)). Residues 12–20 (VGEGSFGRV) and K35 contribute to the ATP site. The active-site Proton acceptor is the D127. Residues 1000 to 1322 (CMEDRDLLKA…VIVAKVSGES (323 aa)) are required for the binding to Kinesin-12 members. ARM repeat units follow at residues 1056–1098 (PRLA…DLSR), 1101–1140 (KAFYKYIGEASVLQPLKEYLTHVDPNIRAKACSALGNMCR), 1143–1182 (GYFYSALAEHQIIGLLIDRCADPDKRTQKFACFAIGNAAY), 1183–1223 (HNDT…NLVR), 1226–1273 (NKLC…LFSL), and 1281–1320 (QICRQFVKSSELFPVIARLKQSPEANIAHYASVIVAKVSG).

The protein belongs to the protein kinase superfamily. Ser/Thr protein kinase family. In terms of assembly, interacts with Kinesin-12 members KIN12A/PAKRP1 and KIN12B/PAKRP1L. Interacts with KIN7B/NACK2. In terms of tissue distribution, ubiquitous.

Its subcellular location is the cytoplasm. The protein resides in the cytoskeleton. It is found in the phragmoplast. The catalysed reaction is L-seryl-[protein] + ATP = O-phospho-L-seryl-[protein] + ADP + H(+). It carries out the reaction L-threonyl-[protein] + ATP = O-phospho-L-threonyl-[protein] + ADP + H(+). Functionally, plays a role in conventional modes of cytokinesis in meristems and during male gametogenesis but also acts in nonconventional modes of cytokinesis (cellularization) during female gametogenesis. Constitutes a signaling module in association with Kinesin-12 members that is required to support phragmoplast expansion and cell-plate growth in plant cells. This is Serine/threonine-protein kinase TIO (TIO) from Arabidopsis thaliana (Mouse-ear cress).